The following is a 727-amino-acid chain: 1,4-alpha-glucan branching enzyme GlgB (727 aa).

The Nucleophile role is filled by Asp405. Glu458 (proton donor) is an active-site residue.

This sequence belongs to the glycosyl hydrolase 13 family. GlgB subfamily. As to quaternary structure, monomer.

The enzyme catalyses Transfers a segment of a (1-&gt;4)-alpha-D-glucan chain to a primary hydroxy group in a similar glucan chain.. It participates in glycan biosynthesis; glycogen biosynthesis. Its function is as follows. Catalyzes the formation of the alpha-1,6-glucosidic linkages in glycogen by scission of a 1,4-alpha-linked oligosaccharide from growing alpha-1,4-glucan chains and the subsequent attachment of the oligosaccharide to the alpha-1,6 position. This chain is 1,4-alpha-glucan branching enzyme GlgB, found in Yersinia pestis bv. Antiqua (strain Antiqua).